Here is a 586-residue protein sequence, read N- to C-terminus: Monoterpene synthase TPS4, chloroplastic (586 aa).

The transit peptide at methionine 1–methionine 47 directs the protein to the chloroplast. 5 residues coordinate Mg(2+): aspartate 340, aspartate 344, aspartate 485, threonine 489, and glutamate 493. Positions aspartate 340–aspartate 344 match the DDXXD motif motif.

This sequence belongs to the terpene synthase family. Tpsg subfamily. Monomer. It depends on Mg(2+) as a cofactor.

The protein localises to the plastid. The protein resides in the chloroplast. It catalyses the reaction (2E)-geranyl diphosphate + H2O = (2E)-geraniol + diphosphate. Its pathway is secondary metabolite biosynthesis; terpenoid biosynthesis. Its function is as follows. Monoterpene synthase involved in the biosynthesis of volatile organic compounds. Mediates the conversion of (2E)-geranyl diphosphate (GPP) into the acyclic monoterpene, geraniol. Does not use (2E,6E)-farnesyl diphosphate (FPP) as substrate. This Cananga odorata (Ylang-ylang tree) protein is Monoterpene synthase TPS4, chloroplastic.